Consider the following 832-residue polypeptide: Protein translocase subunit SecA (832 aa).

ATP is bound by residues Q87, 105–109, and D512; that span reads GEGKT.

The protein belongs to the SecA family. As to quaternary structure, monomer and homodimer. Part of the essential Sec protein translocation apparatus which comprises SecA, SecYEG and auxiliary proteins SecDF-YajC and YidC.

The protein localises to the cell membrane. It is found in the cytoplasm. The enzyme catalyses ATP + H2O + cellular proteinSide 1 = ADP + phosphate + cellular proteinSide 2.. Part of the Sec protein translocase complex. Interacts with the SecYEG preprotein conducting channel. Has a central role in coupling the hydrolysis of ATP to the transfer of proteins into and across the cell membrane, serving as an ATP-driven molecular motor driving the stepwise translocation of polypeptide chains across the membrane. This Wigglesworthia glossinidia brevipalpis protein is Protein translocase subunit SecA.